Reading from the N-terminus, the 400-residue chain is Enoyl-[acyl-carrier-protein] reductase [NADH] (400 aa).

NAD(+) is bound by residues 48-53, 74-75, 111-112, and 139-140; these read GSSSGY, FE, DA, and LA. Substrate is bound at residue tyrosine 225. The active-site Proton donor is tyrosine 235. Residues lysine 244 and 273-275 each bind NAD(+); that span reads VVT.

This sequence belongs to the TER reductase family. Monomer.

It carries out the reaction a 2,3-saturated acyl-[ACP] + NAD(+) = a (2E)-enoyl-[ACP] + NADH + H(+). It functions in the pathway lipid metabolism; fatty acid biosynthesis. Functionally, involved in the final reduction of the elongation cycle of fatty acid synthesis (FAS II). Catalyzes the reduction of a carbon-carbon double bond in an enoyl moiety that is covalently linked to an acyl carrier protein (ACP). The sequence is that of Enoyl-[acyl-carrier-protein] reductase [NADH] from Aliivibrio salmonicida (strain LFI1238) (Vibrio salmonicida (strain LFI1238)).